We begin with the raw amino-acid sequence, 684 residues long: Glycine--tRNA ligase beta subunit (684 aa).

It belongs to the class-II aminoacyl-tRNA synthetase family. In terms of assembly, tetramer of two alpha and two beta subunits.

The protein localises to the cytoplasm. It catalyses the reaction tRNA(Gly) + glycine + ATP = glycyl-tRNA(Gly) + AMP + diphosphate. The sequence is that of Glycine--tRNA ligase beta subunit from Pseudomonas syringae pv. syringae (strain B728a).